The primary structure comprises 121 residues: MSAYTVSRLALDAGVSVHIVRDYLLRGLLRPVACTTGGYGLFDDTALQRLRFVRAAFEAGIGLDALARLCRALDAADGDGASAQLAVLRQLVERRREALASLEMQLAAMPTEPAQHAESLP.

One can recognise an HTH merR-type domain in the interval 3 to 72 (AYTVSRLALD…LDALARLCRA (70 aa)). The segment at residues 6 to 25 (VSRLALDAGVSVHIVRDYLL) is a DNA-binding region (H-T-H motif).

The polypeptide is HTH-type transcriptional regulator MerD (merD) (Acinetobacter calcoaceticus).